Reading from the N-terminus, the 245-residue chain is Nodulation protein G (245 aa).

Residue 11 to 35 (VTGASGAIGGAIARVLHAQGAIVGL) participates in NAD(+) binding. A substrate-binding site is contributed by S139. Y152 (proton acceptor) is an active-site residue.

Belongs to the short-chain dehydrogenases/reductases (SDR) family.

Functionally, proposed to modify Nod factor fatty acyl chain. The chain is Nodulation protein G (nodG) from Rhizobium meliloti (strain 1021) (Ensifer meliloti).